Consider the following 480-residue polypeptide: Probable histone deacetylase 1-A (480 aa).

Positions 10 to 321 (KVCYYYDGDV…WTYETAVALD (312 aa)) are histone deacetylase. The active site involves H141. The interval 388–480 (SIHDDSGEED…KRVKEETKSV (93 aa)) is disordered. A compositionally biased stretch (basic and acidic residues) spans 401-416 (PDKRISIRSSDKRIAC). The segment covering 417–427 (DEEFSDSEDEG) has biased composition (acidic residues). A compositionally biased stretch (basic and acidic residues) spans 443–480 (VKTEEEKEGEDKKDVKEEEKAKDEKTDSKRVKEETKSV).

Belongs to the histone deacetylase family. HD type 1 subfamily. Part of a large multiprotein complex that also contains RBBP4. In terms of tissue distribution, oocyte.

Its subcellular location is the nucleus. The protein localises to the cytoplasm. The enzyme catalyses N(6)-acetyl-L-lysyl-[histone] + H2O = L-lysyl-[histone] + acetate. The catalysed reaction is N(6)-acetyl-L-lysyl-[protein] + H2O = L-lysyl-[protein] + acetate. It carries out the reaction N(6)-(2E)-butenoyl-L-lysyl-[protein] + H2O = (2E)-2-butenoate + L-lysyl-[protein]. Functionally, histone deacetylase that catalyzes the deacetylation of lysine residues on the N-terminal part of the core histones (H2A, H2B, H3 and H4). Histone deacetylation gives a tag for epigenetic repression and plays an important role in transcriptional regulation, cell cycle progression and developmental events. Histone deacetylases act via the formation of large multiprotein complexes. Also functions as deacetylase for non-histone proteins. In addition to protein deacetylase activity, also has protein-lysine deacylase activity: acts as a protein decrotonylase by mediating decrotonylation ((2E)-butenoyl) of histones. This is Probable histone deacetylase 1-A (hdac1-a) from Xenopus laevis (African clawed frog).